Reading from the N-terminus, the 399-residue chain is Ribonuclease T2-like 1-A (399 aa).

Residues 1–17 (MLSILSIAALLIATVQA) form the signal peptide. Disulfide bonds link Cys24-Cys43, Cys32-Cys79, Cys42-Cys150, Cys87-Cys142, and Cys214-Cys249. Catalysis depends on residues His72, Glu135, and His139. Residues 259-279 (KGNSGANTLTTKTTGTTTSGS) are disordered. Residues 262 to 279 (SGANTLTTKTTGTTTSGS) are compositionally biased toward low complexity. The N-linked (GlcNAc...) asparagine glycan is linked to Asn291.

This sequence belongs to the RNase T2 family.

It is found in the vacuole lumen. It localises to the cytoplasm. It catalyses the reaction a ribonucleotidyl-ribonucleotide-RNA + H2O = a 3'-end 3'-phospho-ribonucleotide-RNA + a 5'-end dephospho-ribonucleoside-RNA + H(+). Its function is as follows. Rnase which modulates cell survival under stress conditions. Released from the vacuole to the cytoplasm during stress to promote tRNA and rRNA cleavage and to activate separately a downstream pathway that promotes cell death. Involved in cell size, vacuolar morphology and growth at high temperatures and high salt concentration. This Candida albicans (strain SC5314 / ATCC MYA-2876) (Yeast) protein is Ribonuclease T2-like 1-A (RNY1-A).